The following is a 185-amino-acid chain: Ribosome-recycling factor (185 aa).

This sequence belongs to the RRF family.

The protein localises to the cytoplasm. Functionally, responsible for the release of ribosomes from messenger RNA at the termination of protein biosynthesis. May increase the efficiency of translation by recycling ribosomes from one round of translation to another. This is Ribosome-recycling factor from Heliobacterium modesticaldum (strain ATCC 51547 / Ice1).